The following is a 197-amino-acid chain: Chromophore lyase CpcT/CpeT (197 aa).

The protein belongs to the CpcT/CpeT biliprotein lyase family.

In terms of biological role, covalently attaches a chromophore to Cys residue(s) of phycobiliproteins. The sequence is that of Chromophore lyase CpcT/CpeT from Synechococcus sp. (strain WH8103).